We begin with the raw amino-acid sequence, 255 residues long: Ribosomal RNA small subunit methyltransferase G (255 aa).

S-adenosyl-L-methionine-binding positions include glycine 89, phenylalanine 94, 112-114, 140-141, and arginine 159; these read DST and VE.

This sequence belongs to the methyltransferase superfamily. RNA methyltransferase RsmG family.

The protein localises to the cytoplasm. Its function is as follows. Specifically methylates the N7 position of a guanine in 16S rRNA. The protein is Ribosomal RNA small subunit methyltransferase G of Trichodesmium erythraeum (strain IMS101).